The chain runs to 49 residues: Single-stranded DNA-binding protein (49 aa).

As to quaternary structure, homodimer in the absence of DNA, monomer when binding DNA.

Functionally, binds preferentially to single-stranded DNA and therefore, destabilizes double-stranded DNA. It is involved in DNA replication, repair and recombination. Binds ss-DNA as the replication fork advances and stimulates the replisome processivity and accuracy. The polypeptide is Single-stranded DNA-binding protein (32) (Escherichia coli (Bacteriophage RB32)).